We begin with the raw amino-acid sequence, 185 residues long: Elongation factor P (185 aa).

The protein belongs to the elongation factor P family.

It is found in the cytoplasm. Its pathway is protein biosynthesis; polypeptide chain elongation. Functionally, involved in peptide bond synthesis. Stimulates efficient translation and peptide-bond synthesis on native or reconstituted 70S ribosomes in vitro. Probably functions indirectly by altering the affinity of the ribosome for aminoacyl-tRNA, thus increasing their reactivity as acceptors for peptidyl transferase. This Alkaliphilus oremlandii (strain OhILAs) (Clostridium oremlandii (strain OhILAs)) protein is Elongation factor P.